The following is a 537-amino-acid chain: MSEIRWSKLHSLIHDAPSDSGEYITIIDSLNDLIKETTIEDRRNEIASSKDIFFQLRESAILGKSVDLKQACSSQYMRIVKGIVIIARNLSVANQVIPQNILLPNTFLAWYLSISRQTVCTPGDLKQLYGLVCQFYFNCTRTNVVFDESCFDDHMNFMVEMLRFIDDDGIVNAYSLWLSNIMKSDAFISSLLNDIRSLEVIDKLLLRGIIAQKTEIDLLVEEEDEDKNLSSLATIQLKILKQLVTHECFGSYMKTLRKEYGFASFNKMFKIVTMLVTSSERWDLYQLTAILSWTFDIFEEYTYLVDAFFKSESTPEATDAGPLFAILSSVLDILTTLAKYQHAQKYMISYDGVHKIIKLFDILERNCLKIHFNKSSGAKNVDSSAHPVRATDHVGNVITDAVILKKRIHNNRINDSNFPGIKCFLVELLGFMSYEQKDVQDSVRELHGLELVLSNCIIDDNNPFIKERCIICIRYLLANNSTNQEFISQLEAKKAVDGDVLKKAGYKVDIDGKGNIKLTADKRNAASEEQLFEDVQK.

Belongs to the ataxin-10 family.

It is found in the cytoplasm. May play a role in the regulation of cytokinesis. The polypeptide is Ataxin-10 homolog (CTR86) (Kluyveromyces lactis (strain ATCC 8585 / CBS 2359 / DSM 70799 / NBRC 1267 / NRRL Y-1140 / WM37) (Yeast)).